The following is a 490-amino-acid chain: Betaine aldehyde dehydrogenase (490 aa).

The K(+) site is built by threonine 26, isoleucine 27, and aspartate 93. Residue 150–152 (GAW) participates in NAD(+) binding. Residue lysine 162 is the Charge relay system of the active site. NAD(+) is bound at residue 176 to 179 (KPSE). Position 180 (valine 180) interacts with K(+). Residue 230-233 (GVAS) participates in NAD(+) binding. Leucine 246 contributes to the K(+) binding site. Residue glutamate 252 is the Proton acceptor of the active site. Glycine 254, cysteine 286, and glutamate 387 together coordinate NAD(+). The active-site Nucleophile is the cysteine 286. The residue at position 286 (cysteine 286) is a Cysteine sulfenic acid (-SOH). Lysine 457 and glycine 460 together coordinate K(+). The active-site Charge relay system is glutamate 464.

This sequence belongs to the aldehyde dehydrogenase family. As to quaternary structure, dimer of dimers. K(+) is required as a cofactor.

The enzyme catalyses betaine aldehyde + NAD(+) + H2O = glycine betaine + NADH + 2 H(+). It functions in the pathway amine and polyamine biosynthesis; betaine biosynthesis via choline pathway; betaine from betaine aldehyde: step 1/1. Involved in the biosynthesis of the osmoprotectant glycine betaine. Catalyzes the irreversible oxidation of betaine aldehyde to the corresponding acid. The chain is Betaine aldehyde dehydrogenase from Escherichia coli O6:K15:H31 (strain 536 / UPEC).